A 361-amino-acid chain; its full sequence is DNA replication and repair protein RecF (361 aa).

30–37 serves as a coordination point for ATP; that stretch reads GANGSGKT.

The protein belongs to the RecF family.

The protein resides in the cytoplasm. The RecF protein is involved in DNA metabolism; it is required for DNA replication and normal SOS inducibility. RecF binds preferentially to single-stranded, linear DNA. It also seems to bind ATP. The sequence is that of DNA replication and repair protein RecF from Glaesserella parasuis serovar 5 (strain SH0165) (Haemophilus parasuis).